Consider the following 237-residue polypeptide: Segregation and condensation protein A (237 aa).

This sequence belongs to the ScpA family. Component of a cohesin-like complex composed of ScpA, ScpB and the Smc homodimer, in which ScpA and ScpB bind to the head domain of Smc. The presence of the three proteins is required for the association of the complex with DNA.

It is found in the cytoplasm. Functionally, participates in chromosomal partition during cell division. May act via the formation of a condensin-like complex containing Smc and ScpB that pull DNA away from mid-cell into both cell halves. In Streptococcus thermophilus (strain CNRZ 1066), this protein is Segregation and condensation protein A.